A 190-amino-acid polypeptide reads, in one-letter code: Major intrinsically disordered NOTCH2-binding receptor 1-like (190 aa).

A Phosphoserine modification is found at S79. N109 and N125 each carry an N-linked (GlcNAc...) asparagine glycan. The helical transmembrane segment at 169-189 (GLILLVVISILVTIVTIITFF) threads the bilayer.

Belongs to the MINAR family. As to quaternary structure, interacts with NOTCH2. Highly expressed in the auditory hair cells.

The protein localises to the lysosome membrane. The protein resides in the endoplasmic reticulum membrane. Its function is as follows. Binds cholesterol and may regulate the distribution and homeostasis of cholesterol in hair cells. May play a role in angiogenesis. In Homo sapiens (Human), this protein is Major intrinsically disordered NOTCH2-binding receptor 1-like.